The primary structure comprises 443 residues: MESLVTLYQEHIKTLQQRAQQVLARHSLDAMLIHSGELLTVFLDDHTYPFKVNPQFKAWVPVTQVPNCWLWIDGVNKPKLWFYSPVDYWHDVEPLPQSFWTGEIDIVPLKNADDIARLLPTQRQNVAYIGPVPARATQLGFNTEAINPPGVIDFLHYHRAYKTGYELYCLRQAQVIAVTGHRAAKEAFKSRLSEFDINVAYLSATGHRDTDVPYGNIIALNEHAAVLHYTKLDQQPPEKRRSFLIDAGAEYQGYAADLTRSYAASEGSDYAQLIKDMNKEELELIATMKTGVRYTEYHQQMHYRIASLLLKHQLVNGLTAEAMVKENLTGPFMPHGIGHSLGLQVHDVAGFMQDDRGTHLAAPQQYPYLRCTRVLEPGMVLTIEPGIYFIDSLLAPWRAGKFSQYFDWAKIDELKAYGGIRIEDNVVIHKNSVENMTRDLHLA.

The Mn(2+) site is built by Asp-246, Asp-257, His-339, Glu-384, and Glu-423.

Belongs to the peptidase M24B family. Bacterial-type prolidase subfamily. Mn(2+) serves as cofactor.

It carries out the reaction Xaa-L-Pro dipeptide + H2O = an L-alpha-amino acid + L-proline. Its function is as follows. Splits dipeptides with a prolyl residue in the C-terminal position. The chain is Xaa-Pro dipeptidase from Erwinia tasmaniensis (strain DSM 17950 / CFBP 7177 / CIP 109463 / NCPPB 4357 / Et1/99).